The primary structure comprises 147 residues: uncharacterized protein (147 aa).

Residues 44 to 147 enclose the HTH LytTR-type domain; sequence LVGYIDKEIH…LKSIKERLSI (104 aa).

It is found in the cytoplasm. This is an uncharacterized protein from Staphylococcus aureus (strain bovine RF122 / ET3-1).